A 242-amino-acid chain; its full sequence is ATP synthase subunit a, chloroplastic (242 aa).

A run of 5 helical transmembrane segments spans residues 34–54 (GQVLVVVWFVLALLLLFAVLG), 93–113 (VPFIGTLFLFIFGCNWAGAII), 132–152 (INTTVALALLTSLAYFYAGLS), 188–210 (LFGNVLADELTITVLTSLVPLVI), and 222–242 (GSVQALIFSTLAAAYIAEALE).

This sequence belongs to the ATPase A chain family. In terms of assembly, F-type ATPases have 2 components, CF(1) - the catalytic core - and CF(0) - the membrane proton channel. CF(1) has five subunits: alpha(3), beta(3), gamma(1), delta(1), epsilon(1). CF(0) has four main subunits: a, b, b' and c.

The protein resides in the plastid. It localises to the chloroplast thylakoid membrane. Key component of the proton channel; it plays a direct role in the translocation of protons across the membrane. This is ATP synthase subunit a, chloroplastic from Trieres chinensis (Marine centric diatom).